The chain runs to 373 residues: 3 beta-hydroxysteroid dehydrogenase/Delta 5--&gt;4-isomerase type 1 (373 aa).

NADP(+) is bound by residues 10–15 (GAGGFL), tyrosine 155, and lysine 159. The active-site Proton donor is lysine 159. The chain crosses the membrane as a helical span at residues 288-308 (LALMYWIGFLLEVVSFLLSPV).

It belongs to the 3-beta-HSD family. As to expression, adrenal glands, testes and ovaries.

The protein resides in the endoplasmic reticulum membrane. It is found in the mitochondrion membrane. It catalyses the reaction a 3beta-hydroxy-Delta(5)-steroid + NAD(+) = a 3-oxo-Delta(5)-steroid + NADH + H(+). The catalysed reaction is pregnenolone + NAD(+) = pregn-5-ene-3,20-dione + NADH + H(+). It carries out the reaction 3beta-hydroxyandrost-5-en-17-one + NAD(+) = androst-5-ene-3,17-dione + NADH + H(+). The enzyme catalyses androst-5-en-3beta,17beta-diol + NAD(+) = 17beta-hydroxy-androst-5-en-3-one + NADH + H(+). It catalyses the reaction a 3beta-hydroxysteroid + NADP(+) = a 3-oxosteroid + NADPH + H(+). The catalysed reaction is 5alpha-androstane-3beta,17beta-diol + NADP(+) = 17beta-hydroxy-5alpha-androstan-3-one + NADPH + H(+). It carries out the reaction 3beta-hydroxy-5alpha-androstan-17-one + NADP(+) = 5alpha-androstan-3,17-dione + NADPH + H(+). The enzyme catalyses a 3-oxo-Delta(5)-steroid = a 3-oxo-Delta(4)-steroid. It catalyses the reaction pregn-5-ene-3,20-dione = progesterone. The catalysed reaction is androst-5-ene-3,17-dione = androst-4-ene-3,17-dione. It carries out the reaction 17beta-hydroxy-androst-5-en-3-one = testosterone. The enzyme catalyses 5alpha-androstane-3beta,17beta-diol + NAD(+) = 17beta-hydroxy-5alpha-androstan-3-one + NADH + H(+). The protein operates within steroid hormone biosynthesis. It participates in steroid metabolism. In terms of biological role, a bifunctional enzyme responsible for the oxidation and isomerization of 3beta-hydroxy-Delta(5)-steroid precursors to 3-oxo-Delta(4)-steroids, an essential step in steroid hormone biosynthesis. Specifically catalyzes the conversion of pregnenolone to progesterone, 17alpha-hydroxypregnenolone to 17alpha-hydroxyprogesterone, dehydroepiandrosterone (DHEA) to 4-androstenedione and androstenediol to testosterone. Additionally, catalyzes the interconversion between 3beta-hydroxy and 3-oxo-5alpha-androstane steroids controlling the bioavalability of the active forms. Specifically converts dihydrotestosterone to its inactive form 5alpha-androstanediol, that does not bind androgen receptor/AR. Also converts androstanedione, a precursor of testosterone and estrone, to epiandrosterone. Expected to use NAD(+) as preferred electron donor for the 3beta-hydroxy-steroid dehydrogenase activity and NADPH for the 3-ketosteroid reductase activity. The chain is 3 beta-hydroxysteroid dehydrogenase/Delta 5--&gt;4-isomerase type 1 (HSD3B1) from Macaca mulatta (Rhesus macaque).